A 198-amino-acid polypeptide reads, in one-letter code: (S)-2-hydroxypropylphosphonic acid epoxidase (198 aa).

The HTH cro/C1-type domain occupies 15 to 70 (LKDRREQVKMDHAALASLLGETPETVAAWENGEGGELTLTQLGRIAHVLGTSIGAL). Lysine 23 contributes to the substrate binding site. Positions 26–45 (HAALASLLGETPETVAAWEN) form a DNA-binding region, H-T-H motif. Residues arginine 97, tyrosine 105, 135–138 (NSGH), and glutamate 142 each bind substrate. The 61-residue stretch at 136-196 (SGHAGNEFLF…GTGSAKLIAV (61 aa)) folds into the Cupin type-2 domain. Fe cation is bound by residues histidine 138, glutamate 142, and histidine 180.

The protein belongs to the non-heme iron-dependent dioxygenase family. In terms of assembly, homotetramer. Fe(2+) is required as a cofactor.

It catalyses the reaction (S)-2-hydroxypropylphosphonate + H2O2 = (1R,2S)-epoxypropylphosphonate + 2 H2O. It functions in the pathway antibiotic biosynthesis; fosfomycin biosynthesis. Non-heme-dependent dioxygenase that catalyzes the oxidative epoxidation of (S)-2-hydroxypropylphosphonate into (1R,2S)-epoxypropylphosphonate, the final step in the biosynthesis of fosfomycin antibiotic. This chain is (S)-2-hydroxypropylphosphonic acid epoxidase (hppE), found in Streptomyces wedmorensis.